Here is a 191-residue protein sequence, read N- to C-terminus: GDP-mannose pyrophosphatase (191 aa).

Residues Y17, 38–40 (KRE), R67, and 85–87 (AGL) each bind GDP-alpha-D-mannose. Positions 43 to 180 (DRGNGATILL…EIRDGKTVLL (138 aa)) constitute a Nudix hydrolase domain. The Mg(2+) site is built by A85, E100, and E104. A Nudix box motif is present at residues 86–106 (GLLDNDEPEVCIRKEAIEETG). GDP-alpha-D-mannose contacts are provided by residues E104, E127, 150 to 151 (DE), and K176. Mg(2+) is bound at residue E151.

The protein belongs to the Nudix hydrolase family. NudK subfamily. In terms of assembly, homodimer. Mg(2+) serves as cofactor.

The enzyme catalyses GDP-alpha-D-mannose + H2O = alpha-D-mannose 1-phosphate + GMP + 2 H(+). Functionally, nucleoside diphosphate sugar hydrolase that hydrolyzes GDP-mannose as its preferred substrate, yielding GMP and mannose-1-phosphate. This is GDP-mannose pyrophosphatase (nudK) from Shigella flexneri serotype 5b (strain 8401).